A 449-amino-acid chain; its full sequence is Tubulin alpha chain (449 aa).

Residues Q11, E71, S140, G144, T145, T179, N206, and N228 each contribute to the GTP site. E71 lines the Mg(2+) pocket. E254 is a catalytic residue.

The protein belongs to the tubulin family. Dimer of alpha and beta chains. A typical microtubule is a hollow water-filled tube with an outer diameter of 25 nm and an inner diameter of 15 nM. Alpha-beta heterodimers associate head-to-tail to form protofilaments running lengthwise along the microtubule wall with the beta-tubulin subunit facing the microtubule plus end conferring a structural polarity. Microtubules usually have 13 protofilaments but different protofilament numbers can be found in some organisms and specialized cells. It depends on Mg(2+) as a cofactor.

It localises to the cytoplasm. Its subcellular location is the cytoskeleton. It carries out the reaction GTP + H2O = GDP + phosphate + H(+). In terms of biological role, tubulin is the major constituent of microtubules, a cylinder consisting of laterally associated linear protofilaments composed of alpha- and beta-tubulin heterodimers. Microtubules grow by the addition of GTP-tubulin dimers to the microtubule end, where a stabilizing cap forms. Below the cap, tubulin dimers are in GDP-bound state, owing to GTPase activity of alpha-tubulin. The sequence is that of Tubulin alpha chain (TUBA) from Sordaria macrospora (strain ATCC MYA-333 / DSM 997 / K(L3346) / K-hell).